The primary structure comprises 234 residues: tRNA1(Val) (adenine(37)-N6)-methyltransferase (234 aa).

Belongs to the methyltransferase superfamily. tRNA (adenine-N(6)-)-methyltransferase family.

It is found in the cytoplasm. It catalyses the reaction adenosine(37) in tRNA1(Val) + S-adenosyl-L-methionine = N(6)-methyladenosine(37) in tRNA1(Val) + S-adenosyl-L-homocysteine + H(+). Its function is as follows. Specifically methylates the adenine in position 37 of tRNA(1)(Val) (anticodon cmo5UAC). This is tRNA1(Val) (adenine(37)-N6)-methyltransferase from Aliivibrio fischeri (strain MJ11) (Vibrio fischeri).